The chain runs to 290 residues: Translin-associated protein X (290 aa).

The interval 1–34 (MNGKEGPGGFRKRKHDNFPHNQRREGKDASSSSP) is disordered. Residues 16-28 (DNFPHNQRREGKD) are compositionally biased toward basic and acidic residues. Positions 73–208 (LLHRITSAPD…MRMCINSVGN (136 aa)) are interaction with C1D. Positions 129 and 197 each coordinate Mg(2+). Lysine 279 participates in a covalent cross-link: Glycyl lysine isopeptide (Lys-Gly) (interchain with G-Cter in SUMO2).

This sequence belongs to the translin family. As to quaternary structure, ring-shaped heterooctamer of six TSN and two TSNAX subunits. Interacts with GOLGA3, TSNAXIP1, SUN1 and AKAP9. Interacts with the homodimeric form of C1D following gamma-radiation. Interacts with TSN and C1D in a mutually exclusive manner. Post-translationally, sumoylated with SUMO1. In terms of tissue distribution, detected in cerebellum.

Its subcellular location is the cytoplasm. It localises to the perinuclear region. It is found in the golgi apparatus. The protein localises to the nucleus. Functionally, acts in combination with TSN as an endonuclease involved in the activation of the RNA-induced silencing complex (RISC). Possible role in spermatogenesis. The polypeptide is Translin-associated protein X (Tsnax) (Rattus norvegicus (Rat)).